The chain runs to 432 residues: Tyrosine--tRNA ligase (432 aa).

An L-tyrosine-binding site is contributed by Tyr35. The short motif at 40–49 is the 'HIGH' region element; sequence PTAGSLHVGH. The L-tyrosine site is built by Tyr175 and Gln179. The 'KMSKS' region motif lies at 239-243; sequence KFGKT. Lys242 contacts ATP. An S4 RNA-binding domain is found at 365–422; it reads PPLVDLFASTGLVPSKSAARRTIQEGGAYLNNAKVTDIEARVSEADLLHGRYLVLRRG.

The protein belongs to the class-I aminoacyl-tRNA synthetase family. TyrS type 1 subfamily. As to quaternary structure, homodimer.

It localises to the cytoplasm. It catalyses the reaction tRNA(Tyr) + L-tyrosine + ATP = L-tyrosyl-tRNA(Tyr) + AMP + diphosphate + H(+). Its function is as follows. Catalyzes the attachment of tyrosine to tRNA(Tyr) in a two-step reaction: tyrosine is first activated by ATP to form Tyr-AMP and then transferred to the acceptor end of tRNA(Tyr). This chain is Tyrosine--tRNA ligase, found in Thermobifida fusca (strain YX).